The primary structure comprises 361 residues: Phospho-N-acetylmuramoyl-pentapeptide-transferase (361 aa).

10 helical membrane-spanning segments follow: residues 26 to 46 (SILAALTALFLSLWIGPVLIQ), 73 to 93 (TMGGSLILMTVTLSVLLWGDL), 98 to 118 (VWLVLVVMLAFGAIGWYDDWI), 139 to 159 (IFGLAAGLFLYFTADVPAAVT), 168 to 188 (IALPLTSISFVAITYFWIVGF), 200 to 220 (GLAIMPTVLVACALGVFAYAS), 237 to 257 (AGDLIIICAAIAGAGLGFLWF), 264 to 284 (VFMGDIGALALGAVLGTIAVI), 289 to 309 (LVLVVMGGVFVIETLSVIIQV), and 339 to 359 (VIVRFWIISVVLVLVGLATLK).

Belongs to the glycosyltransferase 4 family. MraY subfamily. It depends on Mg(2+) as a cofactor.

Its subcellular location is the cell inner membrane. The catalysed reaction is UDP-N-acetyl-alpha-D-muramoyl-L-alanyl-gamma-D-glutamyl-meso-2,6-diaminopimeloyl-D-alanyl-D-alanine + di-trans,octa-cis-undecaprenyl phosphate = di-trans,octa-cis-undecaprenyl diphospho-N-acetyl-alpha-D-muramoyl-L-alanyl-D-glutamyl-meso-2,6-diaminopimeloyl-D-alanyl-D-alanine + UMP. Its pathway is cell wall biogenesis; peptidoglycan biosynthesis. Functionally, catalyzes the initial step of the lipid cycle reactions in the biosynthesis of the cell wall peptidoglycan: transfers peptidoglycan precursor phospho-MurNAc-pentapeptide from UDP-MurNAc-pentapeptide onto the lipid carrier undecaprenyl phosphate, yielding undecaprenyl-pyrophosphoryl-MurNAc-pentapeptide, known as lipid I. The sequence is that of Phospho-N-acetylmuramoyl-pentapeptide-transferase from Xylella fastidiosa (strain M12).